The sequence spans 128 residues: uncharacterized protein (128 aa).

This is an uncharacterized protein from Borreliella burgdorferi (strain ATCC 35210 / DSM 4680 / CIP 102532 / B31) (Borrelia burgdorferi).